Here is a 609-residue protein sequence, read N- to C-terminus: Zinc metalloproteinase/disintegrin-like HR1a (609 aa).

Residues 1–20 form the signal peptide; sequence MIQVLLVTICLAVFPYQGSS. A propeptide spanning residues 21-190 is cleaved from the precursor; it reads IILGSGNVND…KKASKLVVTA (170 aa). Residues 200 to 396 enclose the Peptidase M12B domain; it reads RFIELVIVAD…DEPQCILNEP (197 aa). Ca(2+)-binding residues include E203 and D287. N298 is a glycosylation site (N-linked (GlcNAc...) asparagine). 3 disulfide bridges follow: C311–C391, C351–C375, and C353–C358. A Zn(2+)-binding site is contributed by H336. E337 is a catalytic residue. Zn(2+) contacts are provided by H340 and H346. Residue N350 is glycosylated (N-linked (GlcNAc...) asparagine). Residue N374 is glycosylated (N-linked (GlcNAc...) asparagine). Ca(2+)-binding residues include C391 and N394. Positions 397–400 are excised as a propeptide; it reads LRTD. The 87-residue stretch at 404–490 folds into the Disintegrin domain; that stretch reads PPVCGNELLE…DCPTDRFHRN (87 aa). 6 residues coordinate Ca(2+): V406, N409, L411, E413, E416, and D419. Intrachain disulfides connect C407/C426, C407/C436, C418/C431, C418/C436, C420/C426, C430/C453, C444/C450, C449/C475, C462/C482, C469/C494, C469/C501, C494/C506, C501/C506, C513/C528, C513/C563, C528/C571, C541/C551, C551/C558, C558/C597, C563/C571, C591/C602, and C597/C602. The D/ECD-tripeptide motif lies at 468-470; it reads ECD. Residues D470, E473, and D485 each contribute to the Ca(2+) site. N-linked (GlcNAc...) asparagine glycosylation is present at N520.

The protein belongs to the venom metalloproteinase (M12B) family. P-III subfamily. P-IIIb sub-subfamily. Monomer. The cofactor is Zn(2+). As to expression, expressed by the venom gland.

The protein localises to the secreted. Functionally, zinc protease that induces hemorrhage and has proteolytic activity. Has preference for Ala, His, Pro, Met, and Tyr at the P1 position, in descending order (in vitro). Predominantly prefers Val and Asp at the P3 and P2 positions, respectively. Its function is as follows. Inhibits platelet aggregation induced by ADP, thrombin, platelet-activating factor and collagen. Acts by inhibiting fibrinogen interaction with platelet receptors alpha-IIb/beta-3 (ITGA2B/ITGB3). This is Zinc metalloproteinase/disintegrin-like HR1a from Protobothrops flavoviridis (Habu).